Reading from the N-terminus, the 900-residue chain is Translation initiation factor IF-2 (900 aa).

Residues 48-310 (HLNRDRGNAP…KPSSLQQSFN (263 aa)) form a disordered region. Residues 68–82 (STLNVPSTGGKSKSV) show a composition bias toward polar residues. Basic and acidic residues-rich tracts occupy residues 85–98 (EVRK…RDPI) and 108–164 (QARR…KEKV). Residues 165-176 (TNQQNENMTKPA) show a composition bias toward polar residues. Basic and acidic residues predominate over residues 177–237 (QSEKAKREAE…SATKPEESAD (61 aa)). Over residues 263–277 (TRTRAAKVTKQKKGN) the composition is skewed to basic residues. The span at 278–291 (RQSESKADREEARA) shows a compositional bias: basic and acidic residues. Residues 399 to 568 (FRAPVVTIMG…LLQAEVLELK (170 aa)) form the tr-type G domain. Residues 408–415 (GHVDHGKT) form a G1 region. 408–415 (GHVDHGKT) provides a ligand contact to GTP. The tract at residues 433 to 437 (GITQH) is G2. Positions 454-457 (DTPG) are G3. GTP contacts are provided by residues 454–458 (DTPGH) and 508–511 (NKID). A G4 region spans residues 508 to 511 (NKID). Residues 544-546 (SAK) are G5.

The protein belongs to the TRAFAC class translation factor GTPase superfamily. Classic translation factor GTPase family. IF-2 subfamily.

It localises to the cytoplasm. Its function is as follows. One of the essential components for the initiation of protein synthesis. Protects formylmethionyl-tRNA from spontaneous hydrolysis and promotes its binding to the 30S ribosomal subunits. Also involved in the hydrolysis of GTP during the formation of the 70S ribosomal complex. The sequence is that of Translation initiation factor IF-2 from Pectobacterium atrosepticum (strain SCRI 1043 / ATCC BAA-672) (Erwinia carotovora subsp. atroseptica).